A 257-amino-acid polypeptide reads, in one-letter code: Baramicin A1 (257 aa).

A signal peptide spans 1–19 (MKSFGLIALAICGVICVAA). The propeptide occupies 20–21 (EP). Position 22 is a pyrrolidone carboxylic acid (Gln-22). The disordered stretch occupies residues 95–122 (GPNFSAKNLGPNGAKSVGIPQRARRSPQ). Residue Asn-97 is glycosylated (N-linked (GlcNAc...) asparagine). Residues 118-121 (RRSP) constitute a propeptide that is removed on maturation. Gln-122 bears the Pyrrolidone carboxylic acid mark. Positions 145-148 (RRSP) are excised as a propeptide. Gln-149 carries the post-translational modification Pyrrolidone carboxylic acid. The propeptide occupies 172–175 (RRSP). Gln-176 carries the pyrrolidone carboxylic acid modification. A propeptide spanning residues 199-204 (RRGIND) is cleaved from the precursor. N-linked (GlcNAc...) asparagine glycosylation is present at Asn-225.

Post-translationally, proteolytically cleaved. Hemolymph (at protein level).

The protein localises to the secreted. Secreted immune-induced peptides induced by Toll signaling. Has a significant role in resistance to infection by the entomopathogenic fungus B.bassiana R444 and weak antifungal activity against M.rileyi PHP1705. In adult males, activity appears to be important for neuromuscular processes that mediate correct wing posture upon Toll activation. The polypeptide is Baramicin A1 (Drosophila melanogaster (Fruit fly)).